Consider the following 241-residue polypeptide: Beta-nerve growth factor (241 aa).

Positions 1–18 (MSMLFYTLITAFLIGIQA) are cleaved as a signal peptide. The propeptide occupies 19–121 (EPHSESNVPA…PVNRTHRSKR (103 aa)). N69, N114, and N166 each carry an N-linked (GlcNAc...) asparagine glycan. 3 disulfides stabilise this stretch: C136-C201, C179-C229, and C189-C231.

Belongs to the NGF-beta family. As to quaternary structure, homodimer. The homodimer interacts with a single NTRK1 chain. The homodimer interacts with a single NGFR chain. The NGF dimer interacts with a single SORCS2 chain (via extracellular domain). The NGF precursor (proNGF) binds to a receptor complex formed by SORT1 and NGFR, which leads to NGF endocytosis. Both mature NGF and the immature NGF precursor (proNGF) interact with SORCS2 and with the heterodimer formed by SORCS2 and NGFR (via extracellular domains). The NGF precursor (proNGF) has much higher affinity for SORCS2 than mature NGF. The NGF precursor (proNGF) has much higher affinity for SORT1 than mature NGF. Interacts with ADAM10 in a divalent cation-dependent manner. Interacts with SORCS3.

It is found in the secreted. Its subcellular location is the endosome lumen. Nerve growth factor is important for the development and maintenance of the sympathetic and sensory nervous systems. Extracellular ligand for the NTRK1 and NGFR receptors, activates cellular signaling cascades through those receptor tyrosine kinase to regulate neuronal proliferation, differentiation and survival. Inhibits metalloproteinase dependent proteolysis of platelet glycoprotein VI. This chain is Beta-nerve growth factor (NGF), found in Saimiri boliviensis boliviensis (Bolivian squirrel monkey).